Reading from the N-terminus, the 484-residue chain is Ferrochelatase-2, chloroplastic (484 aa).

Belongs to the ferrochelatase family.

It localises to the plastid. The protein resides in the chloroplast. It carries out the reaction heme b + 2 H(+) = protoporphyrin IX + Fe(2+). The protein operates within porphyrin-containing compound metabolism; protoheme biosynthesis; protoheme from protoporphyrin-IX: step 1/1. Functionally, catalyzes the ferrous insertion into protoporphyrin IX. In Hordeum vulgare (Barley), this protein is Ferrochelatase-2, chloroplastic (HEMH).